The sequence spans 324 residues: Putative glycosyltransferase R655 (324 aa).

This sequence belongs to the glycosyltransferase 25 family.

The chain is Putative glycosyltransferase R655 from Acanthamoeba polyphaga (Amoeba).